The sequence spans 548 residues: Polynucleotide 5'-hydroxyl-kinase nol-9 (548 aa).

Residue 186 to 193 (GHKGAGKS) coordinates ATP.

This sequence belongs to the Clp1 family. NOL9/GRC3 subfamily.

Its subcellular location is the nucleus. The protein resides in the nucleolus. Its function is as follows. Polynucleotide 5'-kinase involved in rRNA processing. The chain is Polynucleotide 5'-hydroxyl-kinase nol-9 (nol-9) from Caenorhabditis briggsae.